A 278-amino-acid polypeptide reads, in one-letter code: Sulfur carrier protein FdhD (278 aa).

Residue Cys121 is the Cysteine persulfide intermediate of the active site. Position 260–265 (260–265 (FCKPGR)) interacts with Mo-bis(molybdopterin guanine dinucleotide).

The protein belongs to the FdhD family.

The protein localises to the cytoplasm. Functionally, required for formate dehydrogenase (FDH) activity. Acts as a sulfur carrier protein that transfers sulfur from IscS to the molybdenum cofactor prior to its insertion into FDH. This is Sulfur carrier protein FdhD from Salmonella typhi.